The chain runs to 329 residues: Glycerol-3-phosphate dehydrogenase [NAD(P)+] (329 aa).

4 residues coordinate NADPH: Ser-10, Trp-11, Arg-31, and Lys-105. Sn-glycerol 3-phosphate is bound by residues Lys-105, Gly-134, and Ser-136. Residue Ala-138 participates in NADPH binding. Sn-glycerol 3-phosphate-binding residues include Lys-189, Asp-242, Ser-252, Arg-253, and Asn-254. The Proton acceptor role is filled by Lys-189. Residue Arg-253 participates in NADPH binding. NADPH contacts are provided by Val-277 and Glu-279.

It belongs to the NAD-dependent glycerol-3-phosphate dehydrogenase family.

The protein resides in the cytoplasm. The enzyme catalyses sn-glycerol 3-phosphate + NAD(+) = dihydroxyacetone phosphate + NADH + H(+). The catalysed reaction is sn-glycerol 3-phosphate + NADP(+) = dihydroxyacetone phosphate + NADPH + H(+). The protein operates within membrane lipid metabolism; glycerophospholipid metabolism. Functionally, catalyzes the reduction of the glycolytic intermediate dihydroxyacetone phosphate (DHAP) to sn-glycerol 3-phosphate (G3P), the key precursor for phospholipid synthesis. The chain is Glycerol-3-phosphate dehydrogenase [NAD(P)+] from Neisseria meningitidis serogroup A / serotype 4A (strain DSM 15465 / Z2491).